A 171-amino-acid chain; its full sequence is Cytochrome c oxidase subunit 4 isoform 2, mitochondrial (171 aa).

A mitochondrion-targeting transit peptide spans 1–28; it reads MLPRAAWSLVLRKGGGGRRGMHSSEGTT. Residues 13–32 form a disordered region; sequence KGGGGRRGMHSSEGTTRGGG. At 29-100 the chain is on the mitochondrial matrix side; it reads RGGGKMSPYT…TFAEMNRRSN (72 aa). Residues 101-126 traverse the membrane as a helical segment; the sequence is EWKTVMGCVFFFIGFAALVIWWQRVY. Residues 127–171 lie on the Mitochondrial intermembrane side of the membrane; that stretch reads VFPPKPITLTDERKAQQLQRMLDMKVNPVQGLASRWDYEKKQWKK.

It belongs to the cytochrome c oxidase IV family. As to quaternary structure, component of the cytochrome c oxidase (complex IV, CIV), a multisubunit enzyme composed of 14 subunits. The complex is composed of a catalytic core of 3 subunits MT-CO1, MT-CO2 and MT-CO3, encoded in the mitochondrial DNA, and 11 supernumerary subunits COX4I1 (or COX4I2), COX5A, COX5B, COX6A1 (or COX6A2), COX6B1 (or COX6B2), COX6C, COX7A2 (or COX7A1), COX7B, COX7C, COX8A and NDUFA4, which are encoded in the nuclear genome. The complex exists as a monomer or a dimer and forms supercomplexes (SCs) in the inner mitochondrial membrane with NADH-ubiquinone oxidoreductase (complex I, CI) and ubiquinol-cytochrome c oxidoreductase (cytochrome b-c1 complex, complex III, CIII), resulting in different assemblies (supercomplex SCI(1)III(2)IV(1) and megacomplex MCI(2)III(2)IV(2)). In terms of tissue distribution, highly expressed in lung.

It localises to the mitochondrion inner membrane. It functions in the pathway energy metabolism; oxidative phosphorylation. Functionally, component of the cytochrome c oxidase, the last enzyme in the mitochondrial electron transport chain which drives oxidative phosphorylation. The respiratory chain contains 3 multisubunit complexes succinate dehydrogenase (complex II, CII), ubiquinol-cytochrome c oxidoreductase (cytochrome b-c1 complex, complex III, CIII) and cytochrome c oxidase (complex IV, CIV), that cooperate to transfer electrons derived from NADH and succinate to molecular oxygen, creating an electrochemical gradient over the inner membrane that drives transmembrane transport and the ATP synthase. Cytochrome c oxidase is the component of the respiratory chain that catalyzes the reduction of oxygen to water. Electrons originating from reduced cytochrome c in the intermembrane space (IMS) are transferred via the dinuclear copper A center (CU(A)) of subunit 2 and heme A of subunit 1 to the active site in subunit 1, a binuclear center (BNC) formed by heme A3 and copper B (CU(B)). The BNC reduces molecular oxygen to 2 water molecules using 4 electrons from cytochrome c in the IMS and 4 protons from the mitochondrial matrix. The chain is Cytochrome c oxidase subunit 4 isoform 2, mitochondrial from Homo sapiens (Human).